The primary structure comprises 440 residues: Thymidine phosphorylase (440 aa).

The protein belongs to the thymidine/pyrimidine-nucleoside phosphorylase family. As to quaternary structure, homodimer.

It catalyses the reaction thymidine + phosphate = 2-deoxy-alpha-D-ribose 1-phosphate + thymine. It functions in the pathway pyrimidine metabolism; dTMP biosynthesis via salvage pathway; dTMP from thymine: step 1/2. The enzymes which catalyze the reversible phosphorolysis of pyrimidine nucleosides are involved in the degradation of these compounds and in their utilization as carbon and energy sources, or in the rescue of pyrimidine bases for nucleotide synthesis. This Salmonella heidelberg (strain SL476) protein is Thymidine phosphorylase.